A 35-amino-acid chain; its full sequence is Turripeptide gsp9a (35 aa).

2 positions are modified to 4-hydroxyproline: Pro-3 and Pro-4. Intrachain disulfides connect Cys-7/Cys-22, Cys-12/Cys-26, and Cys-18/Cys-33. A 4-carboxyglutamate mark is found at Glu-14 and Glu-17.

In terms of tissue distribution, expressed by the venom duct.

Its subcellular location is the secreted. The sequence is that of Turripeptide gsp9a from Gemmula speciosa (Splendid gem-turris).